The following is a 56-amino-acid chain: MAVQQNRKTRSKRGMRRSHDALSAPTLSQDKETGTTHRRHHVAPDGFYRGRKVVDV.

The segment at 1–56 (MAVQQNRKTRSKRGMRRSHDALSAPTLSQDKETGTTHRRHHVAPDGFYRGRKVVDV) is disordered. Residues 7–16 (RKTRSKRGMR) are compositionally biased toward basic residues.

Belongs to the bacterial ribosomal protein bL32 family.

The chain is Large ribosomal subunit protein bL32 from Chromohalobacter salexigens (strain ATCC BAA-138 / DSM 3043 / CIP 106854 / NCIMB 13768 / 1H11).